Reading from the N-terminus, the 62-residue chain is Bacteriocin lactacin-F subunit LafX (62 aa).

Positions 1 to 14 (MKLNDKELSKIVGG) are excised as a propeptide.

It belongs to the bacteriocin class IIB family. As to quaternary structure, this bacteriocin depends upon the complementation of two peptides for activity: LafA and LafX. Associated with a 180 kDa bacteriocin complex.

Functionally, heat stable bacteriocin active against Enterococcus faecalis and other Lactobacilli. This chain is Bacteriocin lactacin-F subunit LafX (lafX), found in Lactobacillus johnsonii (strain CNCM I-12250 / La1 / NCC 533).